A 457-amino-acid chain; its full sequence is Bifunctional protein GlmU (457 aa).

The interval 1 to 230 is pyrophosphorylase; the sequence is MPLSLPLHIV…PREVEGVNDL (230 aa). UDP-N-acetyl-alpha-D-glucosamine is bound by residues 12-15, lysine 26, glutamine 78, 83-84, 105-107, glycine 140, glutamate 155, asparagine 170, and asparagine 228; these read LAAG, GT, and YGD. Aspartate 107 is a Mg(2+) binding site. Mg(2+) is bound at residue asparagine 228. The segment at 231–251 is linker; that stretch reads WQLTQLERTWQIRAARALCLQ. An N-acetyltransferase region spans residues 252-457; that stretch reads GARVADPARL…DGWQRPKKKT (206 aa). UDP-N-acetyl-alpha-D-glucosamine contacts are provided by arginine 334 and lysine 352. Histidine 364 serves as the catalytic Proton acceptor. UDP-N-acetyl-alpha-D-glucosamine-binding residues include tyrosine 367 and asparagine 378. Acetyl-CoA is bound by residues alanine 381, 387–388, serine 406, alanine 424, and arginine 441; that span reads NY.

This sequence in the N-terminal section; belongs to the N-acetylglucosamine-1-phosphate uridyltransferase family. It in the C-terminal section; belongs to the transferase hexapeptide repeat family. As to quaternary structure, homotrimer. Requires Mg(2+) as cofactor.

It localises to the cytoplasm. The catalysed reaction is alpha-D-glucosamine 1-phosphate + acetyl-CoA = N-acetyl-alpha-D-glucosamine 1-phosphate + CoA + H(+). It catalyses the reaction N-acetyl-alpha-D-glucosamine 1-phosphate + UTP + H(+) = UDP-N-acetyl-alpha-D-glucosamine + diphosphate. Its pathway is nucleotide-sugar biosynthesis; UDP-N-acetyl-alpha-D-glucosamine biosynthesis; N-acetyl-alpha-D-glucosamine 1-phosphate from alpha-D-glucosamine 6-phosphate (route II): step 2/2. It functions in the pathway nucleotide-sugar biosynthesis; UDP-N-acetyl-alpha-D-glucosamine biosynthesis; UDP-N-acetyl-alpha-D-glucosamine from N-acetyl-alpha-D-glucosamine 1-phosphate: step 1/1. The protein operates within bacterial outer membrane biogenesis; LPS lipid A biosynthesis. In terms of biological role, catalyzes the last two sequential reactions in the de novo biosynthetic pathway for UDP-N-acetylglucosamine (UDP-GlcNAc). The C-terminal domain catalyzes the transfer of acetyl group from acetyl coenzyme A to glucosamine-1-phosphate (GlcN-1-P) to produce N-acetylglucosamine-1-phosphate (GlcNAc-1-P), which is converted into UDP-GlcNAc by the transfer of uridine 5-monophosphate (from uridine 5-triphosphate), a reaction catalyzed by the N-terminal domain. The sequence is that of Bifunctional protein GlmU from Xylella fastidiosa (strain M12).